Reading from the N-terminus, the 485-residue chain is Terminase, large subunit (485 aa).

ADP contacts are provided by residues 17–22, 40–45, and arginine 79; these read KPHHVQ and QSGKSE. Residues 22–197 are ATPase activity; that stretch reads QLAIHRSTAK…EFFLMGWRGG (176 aa). 2 residues coordinate ATP: glutamine 97 and glutamine 99. The Walker A motif signature appears at 125–131; it reads SEFRGKS. Positions 145-150 match the Walker B motif motif; it reads FVILDE. The active-site For ATPase activity is glutamate 150. The tract at residues 256–438 is nuclease; sequence SNSVFSGLDM…DIVMSLALAY (183 aa). 3 residues coordinate Mg(2+): aspartate 294, aspartate 347, and aspartate 429.

This sequence belongs to the Tequatrovirus large terminase family. Interacts with the terminase small subunit; the active complex is composed of a pentamer of terminase large subunits and a dodecamer of terminase small subunits. Interacts with the portal protein. Requires Mg(2+) as cofactor.

The terminase large subunit acts as an ATP driven molecular motor necessary for viral DNA translocation into empty capsids and as an endonuclease that cuts the viral genome to initiate and to end a packaging reaction The terminase lies at a unique vertex of the procapsid and is composed of two subunits, a small terminase subunit involved in viral DNA recognition (packaging sequence), and a large terminase subunit possessing endonucleolytic and ATPase activities. Both terminase subunits heterooligomerize and are docked on the portal protein to form the packaging machine. The terminase large subunit exhibits endonuclease activity and cleaves the viral genome concatemer. Once the capsid is packaged with the DNA, the terminase complex is substituted by the tail. The polypeptide is Terminase, large subunit (Thermus thermophilus (Thermus thermophilus phage P23-45)).